A 515-amino-acid polypeptide reads, in one-letter code: mRNA export factor ICP27 homolog (515 aa).

Zn(2+) contacts are provided by Cys-230, His-335, Cys-337, and Cys-342. The CHC2-type zinc-finger motif lies at 230–342 (CVFNDNGHGD…SNHKCDDVSC (113 aa)). The segment covering 398 to 408 (YSTNHDLPQTS) has biased composition (polar residues). Residues 398 to 422 (YSTNHDLPQTSHRSHKNHGTPKVKS) form a disordered region. Basic residues predominate over residues 409 to 422 (HRSHKNHGTPKVKS).

This sequence belongs to the HHV-1 ICP27 protein family.

The protein localises to the virion tegument. The protein resides in the virion. It is found in the host nucleus. It localises to the host cytoplasm. Functionally, immediate early (EI) protein that plays many roles during productive infection including regulation of viral gene expression and nuclear export of intronless viral RNAs. This is mRNA export factor ICP27 homolog from Human herpesvirus 6A (strain Uganda-1102) (HHV-6 variant A).